The chain runs to 715 residues: Fatty acid oxidation complex subunit alpha (715 aa).

The interval M1–P190 is enoyl-CoA hydratase. The interval G306–N715 is 3-hydroxyacyl-CoA dehydrogenase.

This sequence in the N-terminal section; belongs to the enoyl-CoA hydratase/isomerase family. It in the central section; belongs to the 3-hydroxyacyl-CoA dehydrogenase family. As to quaternary structure, heterotetramer of two alpha chains (FadJ) and two beta chains (FadI).

Its subcellular location is the cytoplasm. The enzyme catalyses a (3S)-3-hydroxyacyl-CoA = a (2E)-enoyl-CoA + H2O. It catalyses the reaction a 4-saturated-(3S)-3-hydroxyacyl-CoA = a (3E)-enoyl-CoA + H2O. The catalysed reaction is a (3S)-3-hydroxyacyl-CoA + NAD(+) = a 3-oxoacyl-CoA + NADH + H(+). It carries out the reaction (3S)-3-hydroxybutanoyl-CoA = (3R)-3-hydroxybutanoyl-CoA. Its pathway is lipid metabolism; fatty acid beta-oxidation. In terms of biological role, catalyzes the formation of a hydroxyacyl-CoA by addition of water on enoyl-CoA. Also exhibits 3-hydroxyacyl-CoA epimerase and 3-hydroxyacyl-CoA dehydrogenase activities. This is Fatty acid oxidation complex subunit alpha from Salmonella paratyphi B (strain ATCC BAA-1250 / SPB7).